Here is a 209-residue protein sequence, read N- to C-terminus: Protein GrpE (209 aa).

Residues 1 to 63 (MKKSRKKENM…NPEEACREEN (63 aa)) form a disordered region. Basic and acidic residues-rich tracts occupy residues 7 to 42 (KENM…KVSP) and 50 to 63 (EAEK…REEN).

The protein belongs to the GrpE family. Homodimer.

The protein localises to the cytoplasm. Its function is as follows. Participates actively in the response to hyperosmotic and heat shock by preventing the aggregation of stress-denatured proteins, in association with DnaK and GrpE. It is the nucleotide exchange factor for DnaK and may function as a thermosensor. Unfolded proteins bind initially to DnaJ; upon interaction with the DnaJ-bound protein, DnaK hydrolyzes its bound ATP, resulting in the formation of a stable complex. GrpE releases ADP from DnaK; ATP binding to DnaK triggers the release of the substrate protein, thus completing the reaction cycle. Several rounds of ATP-dependent interactions between DnaJ, DnaK and GrpE are required for fully efficient folding. The polypeptide is Protein GrpE (Methanosarcina mazei (strain ATCC BAA-159 / DSM 3647 / Goe1 / Go1 / JCM 11833 / OCM 88) (Methanosarcina frisia)).